Here is an 89-residue protein sequence, read N- to C-terminus: LYR motif-containing protein 4 (89 aa).

This sequence belongs to the complex I LYR family.

Its subcellular location is the mitochondrion. It localises to the nucleus. Its pathway is cofactor biosynthesis; iron-sulfur cluster biosynthesis. Functionally, required for nuclear and mitochondrial iron-sulfur protein biosynthesis. The chain is LYR motif-containing protein 4 (lyrm4) from Danio rerio (Zebrafish).